We begin with the raw amino-acid sequence, 152 residues long: Nucleoside diphosphate kinase (152 aa).

ATP contacts are provided by Lys-11, Phe-59, Arg-87, Thr-93, Arg-104, and Asn-114. His-117 serves as the catalytic Pros-phosphohistidine intermediate.

It belongs to the NDK family. As to quaternary structure, homotetramer. Requires Mg(2+) as cofactor.

It is found in the cytoplasm. It catalyses the reaction a 2'-deoxyribonucleoside 5'-diphosphate + ATP = a 2'-deoxyribonucleoside 5'-triphosphate + ADP. It carries out the reaction a ribonucleoside 5'-diphosphate + ATP = a ribonucleoside 5'-triphosphate + ADP. Its function is as follows. Major role in the synthesis of nucleoside triphosphates other than ATP. The ATP gamma phosphate is transferred to the NDP beta phosphate via a ping-pong mechanism, using a phosphorylated active-site intermediate. The protein is Nucleoside diphosphate kinase of Prochlorococcus marinus (strain AS9601).